Consider the following 684-residue polypeptide: Cleavage and polyadenylation specificity factor 73 (684 aa).

Zn(2+)-binding residues include H77, H79, D81, H82, H164, and D185. The Proton donor role is filled by H402. Position 424 (H424) interacts with Zn(2+).

The protein belongs to the metallo-beta-lactamase superfamily. RNA-metabolizing metallo-beta-lactamase-like family. CPSF3 subfamily. Component of the cleavage and polyadenylation specificity factor (CPSF) complex, composed of at least Clp, Cpsf73, Cpsf100 and Cpsf160. Interacts with Sym and Cpsf100 forming a core cleavage factor required for both polyadenylated and histone mRNA processing. Interacts with Slbp and Lsm11. Requires Zn(2+) as cofactor.

The protein localises to the nucleus. In terms of biological role, component of the cleavage and polyadenylation specificity factor (CPSF) complex that plays a key role in pre-mRNA 3'-end formation, recognizing the AAUAAA signal sequence and interacting with poly(A) polymerase and other factors to bring about cleavage and poly(A) addition. Has endonuclease activity and functions as an mRNA 3'-end-processing endonuclease. Required for the cotranscriptional processing of 3'-ends of polyadenylated and histone pre-mRNA. The sequence is that of Cleavage and polyadenylation specificity factor 73 (Cpsf73) from Drosophila melanogaster (Fruit fly).